A 312-amino-acid chain; its full sequence is Ribosomal RNA small subunit methyltransferase H (312 aa).

S-adenosyl-L-methionine-binding positions include 34–36 (GGH), D54, F78, D100, and Q107.

This sequence belongs to the methyltransferase superfamily. RsmH family.

It is found in the cytoplasm. It catalyses the reaction cytidine(1402) in 16S rRNA + S-adenosyl-L-methionine = N(4)-methylcytidine(1402) in 16S rRNA + S-adenosyl-L-homocysteine + H(+). Its function is as follows. Specifically methylates the N4 position of cytidine in position 1402 (C1402) of 16S rRNA. This chain is Ribosomal RNA small subunit methyltransferase H, found in Salmonella choleraesuis (strain SC-B67).